Reading from the N-terminus, the 421-residue chain is ATP-dependent RNA helicase RhlB (421 aa).

Residues 9–37 carry the Q motif motif; the sequence is QKFSDFALHPKVVEALEKKGFHNCTPIQA. The 180-residue stretch at 40–219 folds into the Helicase ATP-binding domain; it reads LPLTLAGRDV…FEQMNNAEYI (180 aa). 53 to 60 is a binding site for ATP; that stretch reads AQTGTGKT. Residues 165–168 carry the DEAD box motif; that stretch reads DEAD. Residues 245–390 enclose the Helicase C-terminal domain; the sequence is RLLQTLIEEE…VSKYNPDALM (146 aa). A disordered region spans residues 392–421; the sequence is DLPKPLRLTRPRTGNGPRRTGTPRNRRRSG. Over residues 402-414 the composition is skewed to low complexity; sequence PRTGNGPRRTGTP.

It belongs to the DEAD box helicase family. RhlB subfamily. Component of the RNA degradosome, which is a multiprotein complex involved in RNA processing and mRNA degradation.

It is found in the cytoplasm. The enzyme catalyses ATP + H2O = ADP + phosphate + H(+). In terms of biological role, DEAD-box RNA helicase involved in RNA degradation. Has RNA-dependent ATPase activity and unwinds double-stranded RNA. The chain is ATP-dependent RNA helicase RhlB from Escherichia coli O17:K52:H18 (strain UMN026 / ExPEC).